A 449-amino-acid chain; its full sequence is GTPase Der (449 aa).

EngA-type G domains lie at 4–174 (PIVA…PPKT) and 183–358 (LRVA…AQRQ). GTP contacts are provided by residues 10 to 17 (GRPNVGKS), 57 to 61 (DTAGL), 126 to 129 (NKCD), 189 to 196 (GRPNVGKS), 236 to 240 (DTAGI), and 301 to 304 (NKWD). Positions 359-444 (KRIPTSELNN…PIVIVFRSRE (86 aa)) constitute a KH-like domain.

Belongs to the TRAFAC class TrmE-Era-EngA-EngB-Septin-like GTPase superfamily. EngA (Der) GTPase family. As to quaternary structure, associates with the 50S ribosomal subunit.

Functionally, GTPase that plays an essential role in the late steps of ribosome biogenesis. This Chloroflexus aggregans (strain MD-66 / DSM 9485) protein is GTPase Der.